The primary structure comprises 430 residues: Histone acetyltransferase type B subunit 2 (430 aa).

WD repeat units follow at residues Pro129–Thr169, Gly180–Ser220, Arg233–Ala273, Ala279–His319, and Gly323–Thr363. Residues Glu365–Asp369 are interaction with the histone H4 N-terminus. One copy of the WD 6 repeat lies at Gly380–Asp420. At Ser425 the chain carries Phosphoserine.

It belongs to the WD repeat RBAP46/RBAP48/MSI1 family. Component of the HAT-B complex composed of at least hat1 and hat2. The HAT-B complex binds to histone H4 tail. Component of the CENP-A recruiting complex composed of at least mis16, mis19, mis19 and mis20.

The protein localises to the cytoplasm. It localises to the nucleus. The protein resides in the chromosome. Its subcellular location is the centromere. It is found in the kinetochore. Functionally, regulatory subunit of the histone acetylase B (HAT-B) complex. The complex acetylates 'Lys-12' of histone H4 which is required for telomeric silencing. Component of the CENP-A recruiting complex that ensures the integrity of mitotic spindles through maintenance of kinetochore factors mis6/CENP-I and cnp1/CENP-A. Maintains the deacetylated state of histones specifically in the central core of the centromeres. The chain is Histone acetyltransferase type B subunit 2 (mis16) from Schizosaccharomyces pombe (strain 972 / ATCC 24843) (Fission yeast).